A 130-amino-acid polypeptide reads, in one-letter code: Fluoride-specific ion channel FluC (130 aa).

A run of 4 helical transmembrane segments spans residues 2 to 22 (GLLL…RFAL), 36 to 56 (GILL…AFLI), 71 to 91 (FLLV…SLDI), and 100 to 120 (IFIA…AVIL). Na(+)-binding residues include Gly-79 and Thr-82.

The protein belongs to the fluoride channel Fluc/FEX (TC 1.A.43) family.

Its subcellular location is the cell inner membrane. The catalysed reaction is fluoride(in) = fluoride(out). Its activity is regulated as follows. Na(+) is not transported, but it plays an essential structural role and its presence is essential for fluoride channel function. Its function is as follows. Fluoride-specific ion channel. Important for reducing fluoride concentration in the cell, thus reducing its toxicity. The polypeptide is Fluoride-specific ion channel FluC (Francisella tularensis subsp. tularensis (strain FSC 198)).